The chain runs to 787 residues: Protein translocase subunit SecA (787 aa).

Residues glutamine 85, 103–107, and aspartate 492 contribute to the ATP site; that span reads GEGKT.

The protein belongs to the SecA family. As to quaternary structure, monomer and homodimer. Part of the essential Sec protein translocation apparatus which comprises SecA, SecYEG and auxiliary proteins SecDF. Other proteins may also be involved.

The protein resides in the cell membrane. It localises to the cytoplasm. The catalysed reaction is ATP + H2O + cellular proteinSide 1 = ADP + phosphate + cellular proteinSide 2.. Part of the Sec protein translocase complex. Interacts with the SecYEG preprotein conducting channel. Has a central role in coupling the hydrolysis of ATP to the transfer of proteins into and across the cell membrane, serving as an ATP-driven molecular motor driving the stepwise translocation of polypeptide chains across the membrane. This is Protein translocase subunit SecA from Lacticaseibacillus casei (strain BL23) (Lactobacillus casei).